We begin with the raw amino-acid sequence, 66 residues long: U10-theraphotoxin-Cg1a 3 (66 aa).

Residues 1–21 form the signal peptide; that stretch reads MKTSVLFVIFGLALLFCLSFA. Positions 22–29 are excised as a propeptide; that stretch reads DELEDTGR. Disulfide bonds link Cys31–Cys46, Cys38–Cys51, and Cys45–Cys58.

The protein belongs to the neurotoxin 10 (Hwtx-1) family. 29 (Jztx-13) subfamily. As to expression, expressed by the venom gland.

Its subcellular location is the secreted. In terms of biological role, probable ion channel inhibitor. This is U10-theraphotoxin-Cg1a 3 from Chilobrachys guangxiensis (Chinese earth tiger tarantula).